Reading from the N-terminus, the 842-residue chain is ATP-binding cassette sub-family B member 6 (842 aa).

At 1 to 26 the chain is on the lumenal side; the sequence is MVTVGNYCEAEGPVGPAWMQDGLSPC. Residues 1-205 form a required for the lysosomal targeting region; sequence MVTVGNYCEA…SGGLFVLGLW (205 aa). Positions 1 to 236 are required for ATPase activity; the sequence is MVTVGNYCEA…RSQVRSAAQQ (236 aa). N6 carries an N-linked (GlcNAc...) asparagine glycan. C8 and C26 are joined by a disulfide. Residues 27-47 form a helical membrane-spanning segment; that stretch reads FFFTLVPSTRMALGTLALVLA. Topologically, residues 48 to 72 are cytoplasmic; the sequence is LPCRRRERPAGADSLSWGAGPRISP. A helical transmembrane segment spans residues 73-93; it reads YVLQLLLATLQAALPLAGLAG. Residues 94–106 lie on the Lumenal side of the membrane; the sequence is RVGTARGAPLPSY. A helical membrane pass occupies residues 107-127; that stretch reads LLLASVLESLAGACGLWLLVV. Over 128-147 the chain is Cytoplasmic; it reads ERSQARQRLAMGIWIKFRHS. The chain crosses the membrane as a helical span at residues 148–168; that stretch reads PGLLLLWTVAFAAENLALVSW. Topologically, residues 169–185 are lumenal; it reads NSPQWWWARADLGQQVQ. Residues 186–206 traverse the membrane as a helical segment; it reads FSLWVLRYVVSGGLFVLGLWA. The Cytoplasmic segment spans residues 207-263; that stretch reads PGLRPQSYTLQVHEEDQDVERSQVRSAAQQSTWRDFGRKLRLLSGYLWPRGSPALQL. Residues 264–284 form a helical membrane-spanning segment; it reads VVLICLGLMGLERALNVLVPI. The ABC transmembrane type-1 domain occupies 265–556; that stretch reads VLICLGLMGL…FGTYYRMIQT (292 aa). The Lumenal portion of the chain corresponds to 285-291; the sequence is FYRNIVN. Residues 292–312 form a helical membrane-spanning segment; it reads LLTEKAPWNSLAWTVTSYVFL. The Cytoplasmic portion of the chain corresponds to 313–375; that stretch reads KFLQGGGTGS…TGEVLRIADR (63 aa). The chain crosses the membrane as a helical span at residues 376-396; sequence GTSSVTGLLSYLVFNVIPTLA. A topological domain (lumenal) is located at residue D397. A helical transmembrane segment spans residues 398–418; it reads IIIGIIYFSMFFNAWFGLIVF. The Cytoplasmic segment spans residues 419-499; sequence LCMSLYLTLT…SSASLVLLNQ (81 aa). The helical transmembrane segment at 500–520 threads the bilayer; that stretch reads TQNLVIGLGLLAGSLLCAYFV. The Lumenal portion of the chain corresponds to 521–529; the sequence is TEQKLQVGD. Residues 530-550 traverse the membrane as a helical segment; sequence YVLFGTYIIQLYMPLNWFGTY. At 551–842 the chain is on the cytoplasmic side; the sequence is YRMIQTNFID…EDTKPQTMER (292 aa). Positions 590–824 constitute an ABC transporter domain; the sequence is IEFENVHFSY…GGVYADMWQL (235 aa). ATP is bound by residues Y599 and 623–634; that span reads GPSGAGKSTILR.

The protein belongs to the ABC transporter superfamily. ABCB family. Heavy Metal importer (TC 3.A.1.210) subfamily. Homodimer. Post-translationally, N-glycosylated. As to expression, widely expressed. High expression is detected in the retinal epithelium. Expressed in mature erythrocytes.

The protein resides in the cell membrane. It localises to the mitochondrion outer membrane. It is found in the endoplasmic reticulum membrane. Its subcellular location is the golgi apparatus membrane. The protein localises to the endosome membrane. The protein resides in the lysosome membrane. It localises to the late endosome membrane. It is found in the early endosome membrane. Its subcellular location is the secreted. The protein localises to the extracellular exosome. The protein resides in the mitochondrion. It localises to the endosome. It is found in the multivesicular body membrane. Its subcellular location is the melanosome membrane. The enzyme catalyses heme b(in) + ATP + H2O = heme b(out) + ADP + phosphate + H(+). The catalysed reaction is coproporphyrin III(in) + ATP + H2O = coproporphyrin III(out) + ADP + phosphate + H(+). It catalyses the reaction pheophorbide a(in) + ATP + H2O = pheophorbide a(out) + ADP + phosphate + H(+). It carries out the reaction coproporphyrinogen III(in) + ATP + H2O = coproporphyrinogen III(out) + ADP + phosphate + H(+). The enzyme catalyses protoporphyrin IX(in) + ATP + H2O = protoporphyrin IX(out) + ADP + phosphate + H(+). The catalysed reaction is coproporphyrin I(in) + ATP + H2O = coproporphyrin I(out) + ADP + phosphate + H(+). It catalyses the reaction uroporphyrin I(in) + ATP + H2O = uroporphyrin I(out) + ADP + phosphate + H(+). It carries out the reaction uroporphyrin III(in) + ATP + H2O = uroporphyrin III(out) + ADP + phosphate + H(+). With respect to regulation, ATPase activity is inhibited by MgATP with an IC(50) of 1.03 mM and up-regulated by coporphyrin III&gt; hemin &gt; protoporphyrin IX. ATPase activity for hemin is up-regulated by glutathione. The ATPase activity is impaired by increasing copper concentrations (0-300 uM). The ATPase activity is stimulated in presence of glutathione for increasing copper concentrations (0-300 uM). Its function is as follows. ATP-dependent transporter that catalyzes the transport of a broad-spectrum of porphyrins from the cytoplasm to the extracellular space through the plasma membrane or into the vesicle lumen. May also function as an ATP-dependent importer of porphyrins from the cytoplasm into the mitochondria, in turn may participate in the de novo heme biosynthesis regulation and in the coordination of heme and iron homeostasis during phenylhydrazine stress. May also play a key role in the early steps of melanogenesis producing PMEL amyloid fibrils. In vitro, it confers to cells a resistance to toxic metal such as arsenic and cadmium and against chemotherapeutics agent such as 5-fluorouracil, SN-38 and vincristin. In addition may play a role in the transition metal homeostasis. The chain is ATP-binding cassette sub-family B member 6 from Homo sapiens (Human).